A 53-amino-acid polypeptide reads, in one-letter code: Mitochondrial sheath formation-associated protein (53 aa).

Mitochondrial intermembrane loops occupy residues 1–6 (MIVLGW) and 1–7 (MIVLGWM). The next 2 helical transmembrane spans lie at 7-23 (MLFVGLATYMGTFPEAM) and 8-24 (LFVGLATYMGTFPEAMP). Cytoplasmic segments follow at residues 24–53 (PPTLKWKERLPGQENKARRRIQALEEELLL) and 25–40 (PTLKWKERLPGQENKA).

As to quaternary structure, interacts with VDAC3. In terms of tissue distribution, testis specific. Detected only in germ cells at the step of spermiogenesis (at protein level). Expressed during the middle steps of spermatid development. Testis specific. Detected only in germ cells at the step of spermiogenesis (at protein level). Expressed in the late steps of spermatid development.

It is found in the mitochondrion outer membrane. Functionally, regulates sperm development. May be involved in mitochondrial sheath formation. In Mus musculus (Mouse), this protein is Mitochondrial sheath formation-associated protein.